We begin with the raw amino-acid sequence, 1081 residues long: DNA polymerase delta catalytic subunit (1081 aa).

The interval 1–22 is disordered; sequence MTSKRPGGSSFQPEVKRKRESD. The Zn(2+) site is built by Cys981, Cys984, Cys998, and Cys1001. The segment at 981-1001 adopts a CysA-type zinc-finger fold; sequence CLGCKSVLPRAESENAVCKHC. [4Fe-4S] cluster contacts are provided by Cys1030, Cys1033, Cys1043, and Cys1048. The CysB motif motif lies at 1030–1048; it reads CQNCAKTMQDKVNCSARDC.

Belongs to the DNA polymerase type-B family. As to quaternary structure, heterodimer with subunits of 125 kDa and 50 kDa. The 125 kDa subunit contains the polymerase active site and most likely the active site for the 3'-5' exonuclease activity. [4Fe-4S] cluster serves as cofactor.

The protein localises to the nucleus. The enzyme catalyses DNA(n) + a 2'-deoxyribonucleoside 5'-triphosphate = DNA(n+1) + diphosphate. In terms of biological role, possesses two enzymatic activities: DNA synthesis (polymerase) and an exonucleolytic activity that degrades single stranded DNA in the 3'- to 5'-direction. Required with its accessory proteins (proliferating cell nuclear antigen (PCNA) and replication factor C (RFC) or activator 1) for leading strand synthesis. Also involved in completing Okazaki fragments initiated by the DNA polymerase alpha/primase complex. The polypeptide is DNA polymerase delta catalytic subunit (Caenorhabditis elegans).